Consider the following 379-residue polypeptide: MTDPVALTADLIRCPSVTPEEGGALSLLEARLSAAGFACTRVDRNGIANLFARWGEKGHARSFGFNGHTDVVPVGARADWRFDPFGAQVEGDWMYGRGAVDMKSAVAAFAAAAMDFVADTPPDGAVILAITGDEEGDAKDGTVALLDWMAAQGEAMDVCLVGEPTCPDEMGEMMKIGRRGSMTFFFEALGVQGHSAYPHRAKNPLPALAKLVDRLAGLELDTGTDHFDPSTLAVTTFDTGNPANNVIPAACRATVNIRFNDAHSSESLTAMVRGIAAEVAAETGIEITDRVSVSGESFITPPGRLSDLVAAAVETETGRVPVLSTSGGTSDARFVQHHCPVVEFGLVGKSMHQVDERVAIAQIPQLKAIYTRILRDYFA.

A Zn(2+)-binding site is contributed by histidine 68. Residue aspartate 70 is part of the active site. A Zn(2+)-binding site is contributed by aspartate 101. The active-site Proton acceptor is the glutamate 134. Zn(2+) contacts are provided by glutamate 135, glutamate 163, and histidine 352.

The protein belongs to the peptidase M20A family. DapE subfamily. As to quaternary structure, homodimer. The cofactor is Zn(2+). Requires Co(2+) as cofactor.

It catalyses the reaction N-succinyl-(2S,6S)-2,6-diaminopimelate + H2O = (2S,6S)-2,6-diaminopimelate + succinate. Its pathway is amino-acid biosynthesis; L-lysine biosynthesis via DAP pathway; LL-2,6-diaminopimelate from (S)-tetrahydrodipicolinate (succinylase route): step 3/3. In terms of biological role, catalyzes the hydrolysis of N-succinyl-L,L-diaminopimelic acid (SDAP), forming succinate and LL-2,6-diaminopimelate (DAP), an intermediate involved in the bacterial biosynthesis of lysine and meso-diaminopimelic acid, an essential component of bacterial cell walls. This chain is Succinyl-diaminopimelate desuccinylase, found in Dinoroseobacter shibae (strain DSM 16493 / NCIMB 14021 / DFL 12).